The following is a 277-amino-acid chain: Urease accessory protein UreD (277 aa).

The protein belongs to the UreD family. UreD, UreF and UreG form a complex that acts as a GTP-hydrolysis-dependent molecular chaperone, activating the urease apoprotein by helping to assemble the nickel containing metallocenter of UreC. The UreE protein probably delivers the nickel.

Its subcellular location is the cytoplasm. Required for maturation of urease via the functional incorporation of the urease nickel metallocenter. The sequence is that of Urease accessory protein UreD from Pseudomonas putida (strain W619).